The chain runs to 256 residues: MSNLTARVIPCLDIKDGRVVKGVNFVDLVDAGDPVESAGIYEENLADELCFLDITASSDRREILLHLVERIAEKIFIPFTVGGGIRTVADVKAVLEKGADKISINTAAFQNPELLTHSSEIYGSQCIVCAIDVKFQKERDRYEIFLHGGRTETGREALDWAREAVGRGAGEILLTSMDRDGTRNGFDINLLKSFSSSLEIPIIASGGAGNPEHMVEAILRGKADAVLAASIFHFGEYSIRETKRAMQEMGISVRLD.

Active-site residues include Asp13 and Asp132.

It belongs to the HisA/HisF family. Heterodimer of HisH and HisF.

The protein resides in the cytoplasm. It carries out the reaction 5-[(5-phospho-1-deoxy-D-ribulos-1-ylimino)methylamino]-1-(5-phospho-beta-D-ribosyl)imidazole-4-carboxamide + L-glutamine = D-erythro-1-(imidazol-4-yl)glycerol 3-phosphate + 5-amino-1-(5-phospho-beta-D-ribosyl)imidazole-4-carboxamide + L-glutamate + H(+). Its pathway is amino-acid biosynthesis; L-histidine biosynthesis; L-histidine from 5-phospho-alpha-D-ribose 1-diphosphate: step 5/9. Functionally, IGPS catalyzes the conversion of PRFAR and glutamine to IGP, AICAR and glutamate. The HisF subunit catalyzes the cyclization activity that produces IGP and AICAR from PRFAR using the ammonia provided by the HisH subunit. The chain is Imidazole glycerol phosphate synthase subunit HisF from Leptospira borgpetersenii serovar Hardjo-bovis (strain JB197).